A 424-amino-acid polypeptide reads, in one-letter code: O-methyltransferase aunD (424 aa).

An S-adenosyl-L-methionine-binding site is contributed by Asp275. The active-site Proton acceptor is His326.

The protein belongs to the class I-like SAM-binding methyltransferase superfamily. Cation-independent O-methyltransferase family.

Its pathway is secondary metabolite biosynthesis. Functionally, O-methyltransferase; part of the gene cluster that mediates the biosynthesis of aurasperone B, a dimeric gamma-naphthopyrone. The first step in the biosynthesis of aurasperone B is the production of gamma-naphthopyrone precursor YWA1 by the non-reducing polyketide synthase albA, via condensation of one acetyl-CoA starter unit with 6 malonyl-CoA units. YWA1 is then methylated by aunE at position C-6 to yield foncesin which is further methylated at position C-8 by aunD to produce fonsecin B. A key enzyme in the biosynthetic pathway is the cytochrome P450 monooxygenase aunB which catalyzes the oxidative dimerization of fonsecin B to aurasperone B. AunB also catalyzes the oxidative dimerization of rubrofusarin B into aurasperone A. The chain is O-methyltransferase aunD from Aspergillus niger (strain ATCC 1015 / CBS 113.46 / FGSC A1144 / LSHB Ac4 / NCTC 3858a / NRRL 328 / USDA 3528.7).